The following is a 124-amino-acid chain: Large ribosomal subunit protein bL12 (124 aa).

The tract at residues 94 to 124 is disordered; it reads APKPVKESVPKAAAEEAKKKLEEAGAKAEIK.

Belongs to the bacterial ribosomal protein bL12 family. Homodimer. Part of the ribosomal stalk of the 50S ribosomal subunit. Forms a multimeric L10(L12)X complex, where L10 forms an elongated spine to which 2 to 4 L12 dimers bind in a sequential fashion. Binds GTP-bound translation factors.

Its function is as follows. Forms part of the ribosomal stalk which helps the ribosome interact with GTP-bound translation factors. Is thus essential for accurate translation. This is Large ribosomal subunit protein bL12 from Paraburkholderia phytofirmans (strain DSM 17436 / LMG 22146 / PsJN) (Burkholderia phytofirmans).